Reading from the N-terminus, the 515-residue chain is Protein FAM98A (515 aa).

2 disordered regions span residues 297–411 (VLMG…YHGG) and 432–515 (SGYQ…HYTS). The segment covering 302 to 311 (VPDRGGRPNE) has biased composition (basic and acidic residues). Positions 382–395 (WTDGGSASGGGYQD) are enriched in gly residues. Residues 444-456 (RYQDGGHHGERGS) are compositionally biased toward basic and acidic residues. Gly residues predominate over residues 457 to 481 (GRGGRGGRGGRGGRGSQGGGWGGRG). A compositionally biased stretch (low complexity) spans 485-501 (YHQGGQFEQHFQHGGYQ). The span at 502–515 (YSHSGFGQGRHYTS) shows a compositional bias: polar residues.

It belongs to the FAM98 family. As to quaternary structure, interacts (via N- and C-terminus) with DDX1. Interacts (via N- and C-terminus) with C14orf166. Interacts with FAM98B. Interacts with PLEKHM1 (via N- and C-terminus).

Its function is as follows. Positively stimulates PRMT1-induced protein arginine methylation. Involved in skeletal homeostasis. Positively regulates lysosome peripheral distribution and ruffled border formation in osteoclasts. The polypeptide is Protein FAM98A (Rattus norvegicus (Rat)).